Reading from the N-terminus, the 583-residue chain is Sensor protein SrrB (583 aa).

Residues 1–11 lie on the Cytoplasmic side of the membrane; the sequence is MMSRLNSVVIK. A helical transmembrane segment spans residues 12–32; it reads LWLTIILIVTTVLILLSIALI. Topologically, residues 33–174 are extracellular; it reads TFMQYYFTQE…SIEDTNNAIT (142 aa). A helical transmembrane segment spans residues 175-195; sequence IITIITAVIFLTITTVFAFFL. Topologically, residues 196 to 583 are cytoplasmic; the sequence is SSRITKPLRR…TFIIKLPKPE (388 aa). The HAMP domain maps to 197–249; it reads SRITKPLRRLRDQATRVSEGDYSYKPSVTTKDEIGQLSQAFNQMSTEIEEHVD. In terms of domain architecture, Histidine kinase spans 366–583; sequence NVSHELRTPI…TFIIKLPKPE (218 aa). Histidine 369 bears the Phosphohistidine; by autocatalysis mark.

It localises to the cell membrane. It carries out the reaction ATP + protein L-histidine = ADP + protein N-phospho-L-histidine.. Its function is as follows. Member of the two-component regulatory system SrrA/SrrB, which is involved in the global regulation of staphylococcal virulence factors in response to environmental oxygen levels as well as biofilm formation. Also plays an essential role in host-derived nitric oxide resistance by regulating hmp/flavohemoglobin, an enzyme that detoxifies nitric oxide by converting it to nitrate. Functions as a sensor protein kinase which is autophosphorylated at a histidine residue and transfers its phosphate group to SrrA. In turn, SrrA binds to the upstream promoter regions of the target genes to positively and negatively regulate their expression. This Staphylococcus aureus (strain MW2) protein is Sensor protein SrrB (srrB).